The following is a 255-amino-acid chain: MNTLTVKSVKERLQEVRDESDPFLAQCEKDPRKSVQTLLEQWLKKHAKEKALKEQWLNMTAYERLSSKKGFRLIAGVDEAGRGPLAGPVVAGAVILPAECEILGLTDSKKLSEKKLEEYYSRITEEAAAVGVGIVHADVIDRINIYEAARLAMVKAVNALTETPDYLLVDAMTLPLDIPQSSVIKGDAKSVSIAAGACIAKVTRDRLMAEYAKTYPMYGFEKNKGYGTKEHLEALQAYGPTTIHRKTFAPVQSYC.

Residues 72–255 (RLIAGVDEAG…KTFAPVQSYC (184 aa)) enclose the RNase H type-2 domain. 3 residues coordinate a divalent metal cation: aspartate 78, glutamate 79, and aspartate 170.

It belongs to the RNase HII family. Requires Mn(2+) as cofactor. It depends on Mg(2+) as a cofactor.

It is found in the cytoplasm. It catalyses the reaction Endonucleolytic cleavage to 5'-phosphomonoester.. Its function is as follows. Endonuclease that specifically degrades the RNA of RNA-DNA hybrids. The sequence is that of Ribonuclease HII from Bacillus velezensis (strain DSM 23117 / BGSC 10A6 / LMG 26770 / FZB42) (Bacillus amyloliquefaciens subsp. plantarum).